Here is a 360-residue protein sequence, read N- to C-terminus: Flavone O-methyltransferase 1 (360 aa).

Position 127–133 (127–133) interacts with substrate; that stretch reads MNQDKVL. The interval 159–177 is substrate binding; sequence AFEYHGTDPRFNRVFNEGM. Positions 205, 228, 248, 249, and 262 each coordinate S-adenosyl-L-methionine. Residue His266 is the Proton acceptor of the active site.

The protein belongs to the class I-like SAM-binding methyltransferase superfamily. Cation-independent O-methyltransferase family. COMT subfamily. As to quaternary structure, homodimer.

Its function is as follows. Flavone-specific O-methyltransferase with a preference for flavones &gt; flavonols. Active with tricetin, luteolin, quercitin and eriodictyol. Very low activity with phenylpropanoids (5-hydroxyferulic acid and caffeic acid). Catalyzes the sequential O-methylation of tricetin via 3'-O-methyltricetin, 3',5'-O-methyltricetin to 3',4',5'-O-trimethyltricetin. This is Flavone O-methyltransferase 1 (OMT1) from Triticum aestivum (Wheat).